Consider the following 490-residue polypeptide: Aspartyl/glutamyl-tRNA(Asn/Gln) amidotransferase subunit B (490 aa).

The protein belongs to the GatB/GatE family. GatB subfamily. Heterotrimer of A, B and C subunits.

The catalysed reaction is L-glutamyl-tRNA(Gln) + L-glutamine + ATP + H2O = L-glutaminyl-tRNA(Gln) + L-glutamate + ADP + phosphate + H(+). It catalyses the reaction L-aspartyl-tRNA(Asn) + L-glutamine + ATP + H2O = L-asparaginyl-tRNA(Asn) + L-glutamate + ADP + phosphate + 2 H(+). Allows the formation of correctly charged Asn-tRNA(Asn) or Gln-tRNA(Gln) through the transamidation of misacylated Asp-tRNA(Asn) or Glu-tRNA(Gln) in organisms which lack either or both of asparaginyl-tRNA or glutaminyl-tRNA synthetases. The reaction takes place in the presence of glutamine and ATP through an activated phospho-Asp-tRNA(Asn) or phospho-Glu-tRNA(Gln). The protein is Aspartyl/glutamyl-tRNA(Asn/Gln) amidotransferase subunit B of Methylobacterium sp. (strain 4-46).